Here is a 400-residue protein sequence, read N- to C-terminus: Elongation factor Tu (400 aa).

Residues 10–208 (KPHMNVGTIG…AMDSYFPDPV (199 aa)) form the tr-type G domain. The segment at 19 to 26 (GHIDHGKT) is G1. 19–26 (GHIDHGKT) contributes to the GTP binding site. Thr26 is a Mg(2+) binding site. Residues 60-64 (GITIN) are G2. The segment at 81 to 84 (DCPG) is G3. Residues 81 to 85 (DCPGH) and 136 to 139 (NKVD) contribute to the GTP site. Positions 136 to 139 (NKVD) are G4. A G5 region spans residues 174–176 (SAL).

This sequence belongs to the TRAFAC class translation factor GTPase superfamily. Classic translation factor GTPase family. EF-Tu/EF-1A subfamily. Monomer.

It localises to the cytoplasm. It carries out the reaction GTP + H2O = GDP + phosphate + H(+). Its function is as follows. GTP hydrolase that promotes the GTP-dependent binding of aminoacyl-tRNA to the A-site of ribosomes during protein biosynthesis. This is Elongation factor Tu from Fervidobacterium nodosum (strain ATCC 35602 / DSM 5306 / Rt17-B1).